The sequence spans 219 residues: NADH-ubiquinone oxidoreductase 23 kDa subunit, mitochondrial (219 aa).

4Fe-4S ferredoxin-type domains lie at 111–140 (RRYP…IEAE) and 150–179 (TRYD…ESPN). [4Fe-4S] cluster-binding residues include Cys120, Cys123, Cys126, Cys130, Cys159, Cys162, Cys165, and Cys169.

This sequence belongs to the complex I 23 kDa subunit family. As to quaternary structure, complex I is composed of about 40 different subunits. The cofactor is [4Fe-4S] cluster.

It is found in the mitochondrion. The catalysed reaction is a ubiquinone + NADH + 5 H(+)(in) = a ubiquinol + NAD(+) + 4 H(+)(out). Core subunit of the mitochondrial membrane respiratory chain NADH dehydrogenase (Complex I) that is believed to belong to the minimal assembly required for catalysis. Complex I functions in the transfer of electrons from NADH to the respiratory chain. The immediate electron acceptor for the enzyme is believed to be ubiquinone. May donate electrons to ubiquinone. The chain is NADH-ubiquinone oxidoreductase 23 kDa subunit, mitochondrial (nuo21.3c) from Neurospora crassa (strain ATCC 24698 / 74-OR23-1A / CBS 708.71 / DSM 1257 / FGSC 987).